A 155-amino-acid polypeptide reads, in one-letter code: Small ribosomal subunit protein uS7c (155 aa).

This sequence belongs to the universal ribosomal protein uS7 family. As to quaternary structure, part of the 30S ribosomal subunit.

It is found in the plastid. The protein localises to the chloroplast. One of the primary rRNA binding proteins, it binds directly to 16S rRNA where it nucleates assembly of the head domain of the 30S subunit. The polypeptide is Small ribosomal subunit protein uS7c (rps7) (Gunnera chilensis (Chilean rhubarb)).